A 313-amino-acid chain; its full sequence is D-alanine--D-alanine ligase (313 aa).

Residues 108–308 enclose the ATP-grasp domain; it reads KLVWQQTGVP…YSELVVKVLS (201 aa). 138–193 contributes to the ATP binding site; that stretch reads VAKLGLPLFVKPASEGSSVAVLKVKTADALPAALAEAATHDKIVIVEKSIEGGGEY. 3 residues coordinate Mg(2+): D262, E275, and N277.

The protein belongs to the D-alanine--D-alanine ligase family. Mg(2+) is required as a cofactor. The cofactor is Mn(2+).

The protein localises to the cytoplasm. The enzyme catalyses 2 D-alanine + ATP = D-alanyl-D-alanine + ADP + phosphate + H(+). Its pathway is cell wall biogenesis; peptidoglycan biosynthesis. Its function is as follows. Cell wall formation. In Burkholderia multivorans (strain ATCC 17616 / 249), this protein is D-alanine--D-alanine ligase.